Consider the following 217-residue polypeptide: Large ribosomal subunit protein uL3 (217 aa).

It belongs to the universal ribosomal protein uL3 family. In terms of assembly, part of the 50S ribosomal subunit. Forms a cluster with proteins L14 and L19.

Functionally, one of the primary rRNA binding proteins, it binds directly near the 3'-end of the 23S rRNA, where it nucleates assembly of the 50S subunit. This chain is Large ribosomal subunit protein uL3, found in Brachyspira hyodysenteriae (strain ATCC 49526 / WA1).